The primary structure comprises 268 residues: Nickel import ATP-binding protein NikE (268 aa).

Residues Leu-4–Asn-252 form the ABC transporter domain. Gly-45–Ser-52 provides a ligand contact to ATP.

This sequence belongs to the ABC transporter superfamily. Nickel importer (TC 3.A.1.5.3) family. In terms of assembly, the complex is composed of two ATP-binding proteins (NikD and NikE), two transmembrane proteins (NikB and NikC) and a solute-binding protein (NikA).

Its subcellular location is the cell inner membrane. It catalyses the reaction Ni(2+)(out) + ATP + H2O = Ni(2+)(in) + ADP + phosphate + H(+). Its function is as follows. Part of the ABC transporter complex NikABCDE involved in nickel import. Responsible for energy coupling to the transport system. The protein is Nickel import ATP-binding protein NikE of Escherichia coli O157:H7.